The following is a 273-amino-acid chain: 4-hydroxy-3-methylbut-2-enyl diphosphate reductase (273 aa).

C12 provides a ligand contact to [4Fe-4S] cluster. (2E)-4-hydroxy-3-methylbut-2-enyl diphosphate-binding residues include H36 and H70. Residues H36 and H70 each contribute to the dimethylallyl diphosphate site. Isopentenyl diphosphate-binding residues include H36 and H70. C92 serves as a coordination point for [4Fe-4S] cluster. H120 is a binding site for (2E)-4-hydroxy-3-methylbut-2-enyl diphosphate. Position 120 (H120) interacts with dimethylallyl diphosphate. Isopentenyl diphosphate is bound at residue H120. E122 (proton donor) is an active-site residue. Residue T157 participates in (2E)-4-hydroxy-3-methylbut-2-enyl diphosphate binding. C185 serves as a coordination point for [4Fe-4S] cluster. (2E)-4-hydroxy-3-methylbut-2-enyl diphosphate-binding residues include S213, S214, N215, and S257. The dimethylallyl diphosphate site is built by S213, S214, N215, and S257. S213, S214, N215, and S257 together coordinate isopentenyl diphosphate.

This sequence belongs to the IspH family. Requires [4Fe-4S] cluster as cofactor.

It carries out the reaction isopentenyl diphosphate + 2 oxidized [2Fe-2S]-[ferredoxin] + H2O = (2E)-4-hydroxy-3-methylbut-2-enyl diphosphate + 2 reduced [2Fe-2S]-[ferredoxin] + 2 H(+). It catalyses the reaction dimethylallyl diphosphate + 2 oxidized [2Fe-2S]-[ferredoxin] + H2O = (2E)-4-hydroxy-3-methylbut-2-enyl diphosphate + 2 reduced [2Fe-2S]-[ferredoxin] + 2 H(+). It participates in isoprenoid biosynthesis; dimethylallyl diphosphate biosynthesis; dimethylallyl diphosphate from (2E)-4-hydroxy-3-methylbutenyl diphosphate: step 1/1. It functions in the pathway isoprenoid biosynthesis; isopentenyl diphosphate biosynthesis via DXP pathway; isopentenyl diphosphate from 1-deoxy-D-xylulose 5-phosphate: step 6/6. Functionally, catalyzes the conversion of 1-hydroxy-2-methyl-2-(E)-butenyl 4-diphosphate (HMBPP) into a mixture of isopentenyl diphosphate (IPP) and dimethylallyl diphosphate (DMAPP). Acts in the terminal step of the DOXP/MEP pathway for isoprenoid precursor biosynthesis. This chain is 4-hydroxy-3-methylbut-2-enyl diphosphate reductase, found in Helicobacter hepaticus (strain ATCC 51449 / 3B1).